Here is a 203-residue protein sequence, read N- to C-terminus: ATP-dependent Clp protease proteolytic subunit (203 aa).

The active-site Nucleophile is Ser-107. His-132 is a catalytic residue.

Belongs to the peptidase S14 family. Fourteen ClpP subunits assemble into 2 heptameric rings which stack back to back to give a disk-like structure with a central cavity, resembling the structure of eukaryotic proteasomes.

Its subcellular location is the cytoplasm. The enzyme catalyses Hydrolysis of proteins to small peptides in the presence of ATP and magnesium. alpha-casein is the usual test substrate. In the absence of ATP, only oligopeptides shorter than five residues are hydrolyzed (such as succinyl-Leu-Tyr-|-NHMec, and Leu-Tyr-Leu-|-Tyr-Trp, in which cleavage of the -Tyr-|-Leu- and -Tyr-|-Trp bonds also occurs).. Its function is as follows. Cleaves peptides in various proteins in a process that requires ATP hydrolysis. Has a chymotrypsin-like activity. Plays a major role in the degradation of misfolded proteins. The chain is ATP-dependent Clp protease proteolytic subunit from Shewanella loihica (strain ATCC BAA-1088 / PV-4).